The sequence spans 344 residues: AP2/ERF and B3 domain-containing transcription factor RAV1 (344 aa).

Residues 1 to 15 show a composition bias toward low complexity; it reads MESSSVDESTTSTGS. Residues 1–22 are disordered; that stretch reads MESSSVDESTTSTGSICETPAI. The segment at residues 61 to 116 is a DNA-binding region (AP2/ERF); it reads KYKGVVPQPNGRWGAQIYEKHQRVWLGTFNEEDEAARAYDVAVHRFRRRDAVTNFK. Positions 148-169 are disordered; it reads ELEQSKRRRNGNGNMTRTLLTS. Positions 188 to 292 form a DNA-binding region, TF-B3; that stretch reads FEKAVTPSDV…QLYIGWKSRS (105 aa).

It belongs to the AP2/ERF transcription factor family. RAV subfamily. As to quaternary structure, monomer. Expressed in all tissues examined: Roots, rosette leaves, cauline leaves, inflorescence stems, flowers and siliques. Highest expression in roots and rosette leaves. Very low expression in flowers.

The protein localises to the nucleus. Functionally, binds specifically to bipartite recognition sequences composed of two unrelated motifs, 5'-CAACA-3' and 5'-CACCTG-3'. May function as negative regulator of plant growth and development. The protein is AP2/ERF and B3 domain-containing transcription factor RAV1 (RAV1) of Arabidopsis thaliana (Mouse-ear cress).